The following is a 751-amino-acid chain: Catalase-peroxidase (751 aa).

The segment at 1–21 (MSNESKCPFHQTAGGGTTNRD) is disordered. Residues 90–244 (WHSAGTYRIG…LAAVQMGLIY (155 aa)) constitute a cross-link (tryptophyl-tyrosyl-methioninium (Trp-Tyr) (with M-270)). The active-site Proton acceptor is the His-91. A disordered region spans residues 195–227 (YGKDQVKAQPPGQGDLVAEPAKHGEEQNRDLSA). The segment covering 214-227 (PAKHGEEQNRDLSA) has biased composition (basic and acidic residues). A cross-link (tryptophyl-tyrosyl-methioninium (Tyr-Met) (with W-90)) is located at residues 244 to 270 (YVNPEGPEGNPDPVASGKDIRETFGRM). Heme b is bound at residue His-285. The segment at 365 to 387 (AHQWRPKEGKGAGTVPDAHDPGK) is disordered.

This sequence belongs to the peroxidase family. Peroxidase/catalase subfamily. Homodimer or homotetramer. The cofactor is heme b. In terms of processing, formation of the three residue Trp-Tyr-Met cross-link is important for the catalase, but not the peroxidase activity of the enzyme.

It catalyses the reaction H2O2 + AH2 = A + 2 H2O. The catalysed reaction is 2 H2O2 = O2 + 2 H2O. In terms of biological role, bifunctional enzyme with both catalase and broad-spectrum peroxidase activity. In Pseudomonas putida (strain ATCC 700007 / DSM 6899 / JCM 31910 / BCRC 17059 / LMG 24140 / F1), this protein is Catalase-peroxidase.